The sequence spans 545 residues: T-complex protein 1 subunit gamma (545 aa).

M1 is modified (N-acetylmethionine). The interval 1 to 24 (MMGHRPVLVLSQNTKRESGRKVQS) is disordered. A Phosphoserine modification is found at S11. A Glycyl lysine isopeptide (Lys-Gly) (interchain with G-Cter in SUMO2) cross-link involves residue K15. G42 serves as a coordination point for ADP. G42 lines the ATP pocket. Residue D93 participates in Mg(2+) binding. G94, T95, T96, S97, T162, and K163 together coordinate ADP. Residues G94, T95, and T96 each contribute to the ATP site. Phosphoserine is present on S170. Residue K222 is modified to N6-acetyllysine. A phosphoserine mark is found at S243 and S244. The residue at position 247 (Y247) is a Phosphotyrosine. Residues K248 and K249 each participate in a glycyl lysine isopeptide (Lys-Gly) (interchain with G-Cter in SUMO2) cross-link. A Phosphoserine modification is found at S252. A disulfide bridge connects residues C366 and C372. A Glycyl lysine isopeptide (Lys-Gly) (interchain with G-Cter in SUMO2) cross-link involves residue K381. ADP is bound at residue G411. G411 is a binding site for ATP. Residues T430 and T459 each carry the phosphothreonine modification. 4 residues coordinate ADP: G482, E483, E497, and K502. Position 482 (G482) interacts with ATP. E497 lines the ATP pocket. Residues 526–545 (HKKKGDDQSRQGGAPDAGQE) are disordered.

The protein belongs to the TCP-1 chaperonin family. In terms of assembly, component of the chaperonin-containing T-complex (TRiC), a hexadecamer composed of two identical back-to-back stacked rings enclosing a protein folding chamber. Each ring is made up of eight different subunits: TCP1/CCT1, CCT2, CCT3, CCT4, CCT5, CCT6A/CCT6, CCT7, CCT8. Interacts with PACRG. Interacts with DNAAF4. Interacts with DLEC1.

Its subcellular location is the cytoplasm. The enzyme catalyses ATP + H2O = ADP + phosphate + H(+). In terms of biological role, component of the chaperonin-containing T-complex (TRiC), a molecular chaperone complex that assists the folding of actin, tubulin and other proteins upon ATP hydrolysis. The TRiC complex mediates the folding of WRAP53/TCAB1, thereby regulating telomere maintenance. As part of the TRiC complex may play a role in the assembly of BBSome, a complex involved in ciliogenesis regulating transports vesicles to the cilia. In Homo sapiens (Human), this protein is T-complex protein 1 subunit gamma (CCT3).